Here is a 165-residue protein sequence, read N- to C-terminus: UPF0303 protein BamMC406_1480 (165 aa).

It belongs to the UPF0303 family.

In Burkholderia ambifaria (strain MC40-6), this protein is UPF0303 protein BamMC406_1480.